The following is a 238-amino-acid chain: Dof zinc finger protein MNB1A (238 aa).

Residues 1–13 (MQEASSAAAAGAE) are compositionally biased toward low complexity. Positions 1 to 48 (MQEASSAAAAGAEPGRRAAQHQFAGVDLRRPKGYAAPAPAPAVGEGDP) are disordered. The Dof-type zinc-finger motif lies at 47–101 (DPCPRCASRDTKFCYYNNYNTSQPRHFCKGCRRYWTKGGTLRNVPVGGGTRKKPS). Cysteine 49, cysteine 52, cysteine 74, and cysteine 77 together coordinate Zn(2+). A disordered region spans residues 85–155 (GTLRNVPVGG…TATTTTTTSE (71 aa)). Residues 119–130 (PKKKPASKKRRV) show a composition bias toward basic residues. Residues 138–155 (ATAADPGKTATTTTTTSE) show a composition bias toward low complexity.

As to expression, expressed in all tissues examined.

Its subcellular location is the nucleus. Functionally, transcription factor that binds specifically to a 5'-AA[AG]G-3' consensus core sequence at the MNF1-binding site. The protein is Dof zinc finger protein MNB1A (MNB1A) of Zea mays (Maize).